A 95-amino-acid polypeptide reads, in one-letter code: Aspartyl/glutamyl-tRNA(Asn/Gln) amidotransferase subunit C (95 aa).

Belongs to the GatC family. Heterotrimer of A, B and C subunits.

The enzyme catalyses L-glutamyl-tRNA(Gln) + L-glutamine + ATP + H2O = L-glutaminyl-tRNA(Gln) + L-glutamate + ADP + phosphate + H(+). It catalyses the reaction L-aspartyl-tRNA(Asn) + L-glutamine + ATP + H2O = L-asparaginyl-tRNA(Asn) + L-glutamate + ADP + phosphate + 2 H(+). Functionally, allows the formation of correctly charged Asn-tRNA(Asn) or Gln-tRNA(Gln) through the transamidation of misacylated Asp-tRNA(Asn) or Glu-tRNA(Gln) in organisms which lack either or both of asparaginyl-tRNA or glutaminyl-tRNA synthetases. The reaction takes place in the presence of glutamine and ATP through an activated phospho-Asp-tRNA(Asn) or phospho-Glu-tRNA(Gln). This chain is Aspartyl/glutamyl-tRNA(Asn/Gln) amidotransferase subunit C, found in Dechloromonas aromatica (strain RCB).